The chain runs to 415 residues: tRNA(Met) cytidine acetate ligase (415 aa).

Residues 7–20 (VVEYNPFHNGHLYH), glycine 101, asparagine 162, and 187–188 (RI) each bind ATP.

The protein belongs to the TmcAL family. As to quaternary structure, homodimer.

It is found in the cytoplasm. It carries out the reaction cytidine(34) in elongator tRNA(Met) + acetate + ATP = N(4)-acetylcytidine(34) in elongator tRNA(Met) + AMP + diphosphate. In terms of biological role, catalyzes the formation of N(4)-acetylcytidine (ac(4)C) at the wobble position of elongator tRNA(Met), using acetate and ATP as substrates. First activates an acetate ion to form acetyladenylate (Ac-AMP) and then transfers the acetyl group to tRNA to form ac(4)C34. This Bacillus subtilis (strain 168) protein is tRNA(Met) cytidine acetate ligase.